Reading from the N-terminus, the 82-residue chain is RNA-binding protein Hfq (82 aa).

The 61-residue stretch at 10 to 70 (DTFLNHVRKN…ISTIMPAQPV (61 aa)) folds into the Sm domain.

Belongs to the Hfq family. As to quaternary structure, homohexamer.

Functionally, RNA chaperone that binds small regulatory RNA (sRNAs) and mRNAs to facilitate mRNA translational regulation in response to envelope stress, environmental stress and changes in metabolite concentrations. Also binds with high specificity to tRNAs. The sequence is that of RNA-binding protein Hfq from Parvibaculum lavamentivorans (strain DS-1 / DSM 13023 / NCIMB 13966).